Here is a 502-residue protein sequence, read N- to C-terminus: Adenylate cyclase (502 aa).

Residues 1-25 (MGDFCRRVDCKAMKFFALRSSIRTQ) lie on the Cytoplasmic side of the membrane. The chain crosses the membrane as a helical span at residues 26-46 (IMASTTLLILALIGAIVTVWA). Topologically, residues 47–203 (KSESTLYHQE…RKVNLAVTNA (157 aa)) are lumenal, thylakoid. Residues 204–226 (VNQALVVGFAGLNIGWICAYFLA) traverse the membrane as a helical segment. Residues 227-280 (QHLSDPVRRLQISVAKIAGGDLQHRADIHSRADEIGALATSVNEMSAALQISFN) enclose the HAMP domain. At 227-502 (QHLSDPVRRL…EAISIYEVKA (276 aa)) the chain is on the cytoplasmic side. The 132-residue stretch at 320–451 (TILFCDIRGY…DAVNVASRIE (132 aa)) folds into the Guanylate cyclase domain. Positions 325 and 369 each coordinate Mg(2+).

This sequence belongs to the adenylyl cyclase class-3 family. Requires Mg(2+) as cofactor.

Its subcellular location is the cellular thylakoid membrane. It catalyses the reaction ATP = 3',5'-cyclic AMP + diphosphate. May function as a membrane-localized receptor protein. This Anabaena cylindrica protein is Adenylate cyclase (cya).